We begin with the raw amino-acid sequence, 425 residues long: MAGYVVVGTQWGDEGKGKIIDVLSEKADYVVRFQGGNNAGHTVVVNGEKFILQLLPSGVLQAGTCVIGPGVVVDPKVFLDEIDRIEKRGAKTDHVIISDRAHVIMPYHIEMDKIRESVEDRIKIGTTKKGIGPCYADKIARDGIRMSDLLDLKQFEEKLRANLKEKNEIFTKIYGLEPLDFDKIFEEYKGYIEKIKHRIVDTIPIVNKALDENKLVLFEGAQAMMLDINYGTYPYVTSSSPTLGGVTTGAGVSPRKINKGIGVMKAYTTRVGEGPFVTEIKGEFGDKIKGIGGEYGAVTGRPRRCGWLDLVVGRYATEINGLTDIVITKIDVLSGLGKLKICTAYEIDGKVYDYVPADTKSLDKAIPIYEELDGWDEDITQIKKYEDLPVNCRKYLERVQEILACPISVVSVGPDRSQNIHIREI.

GTP is bound by residues 12-18 (GDEGKGK) and 40-42 (GHT). The active-site Proton acceptor is the Asp-13. Residues Asp-13 and Gly-40 each coordinate Mg(2+). IMP is bound by residues 13 to 16 (DEGK), 38 to 41 (NAGH), Thr-127, Arg-141, Gln-222, Thr-237, and Arg-301. His-41 serves as the catalytic Proton donor. 297–303 (AVTGRPR) provides a ligand contact to substrate. GTP is bound by residues Arg-303, 329–331 (KID), and 411–413 (SVG).

It belongs to the adenylosuccinate synthetase family. Homodimer. Mg(2+) serves as cofactor.

It localises to the cytoplasm. It carries out the reaction IMP + L-aspartate + GTP = N(6)-(1,2-dicarboxyethyl)-AMP + GDP + phosphate + 2 H(+). The protein operates within purine metabolism; AMP biosynthesis via de novo pathway; AMP from IMP: step 1/2. In terms of biological role, plays an important role in the de novo pathway of purine nucleotide biosynthesis. Catalyzes the first committed step in the biosynthesis of AMP from IMP. The sequence is that of Adenylosuccinate synthetase from Fusobacterium nucleatum.